The chain runs to 482 residues: Mannan endo-1,4-beta-mannosidase (482 aa).

A signal peptide spans 1 to 21; sequence MARTLRYLLCGILALAAGSNA. The 119-residue stretch at 42 to 160 folds into the CBM6 domain; sequence TTYEAEDAIL…WYLVDSITLT (119 aa). N-linked (GlcNAc...) asparagine glycans are attached at residues Asn-171 and Asn-300. Positions 181 to 474 constitute a GH26 domain; sequence ASARALYDYL…YTSDYVLTLD (294 aa). Catalysis depends on Glu-332, which acts as the Proton donor. Glu-422 serves as the catalytic Nucleophile.

This sequence belongs to the glycosyl hydrolase 26 family.

It localises to the secreted. The activity is completely impaired by Ag(+), partially inhibited by Zn(2+), and enhanced by Co(2+), Ni(2+) and Cu(2+) by 22.6, 14.5 and 20.8 %, respectively. Ca(2+), Na(+), Mg(2+), Mn(2+), urea and EDTA do not significantly affect the mannanase activity. Its function is as follows. Mannan endo-1,4-beta-mannosidase that exhibits high activity against konjac glucomannan and carob galactomannan, as well as a lower activity toward beta-mannan. Shows no activity against barley beta-glucan, birchwood xylan, and low viscosity carboxymethyl cellulose (CMC). Has the ability to hydrolyze manno-oligosaccharides such as M4 which is degraded slightly to M3 and M1, M5 which is mainly degraded to M4 and M1, and M6 which is mostly hydrolyzed to M4 and M2. Shows no activity toward M2 and M3 manno-oligosaccharides. In Thermothelomyces thermophilus (strain ATCC 42464 / BCRC 31852 / DSM 1799) (Sporotrichum thermophile), this protein is Mannan endo-1,4-beta-mannosidase.